A 742-amino-acid chain; its full sequence is Pyriculol/pyriculariol biosynthesis cluster transcription factor 1 (742 aa).

Positions 23–49 (CVLCQHRKIKCDRSFPCANCQRANVQC) form a DNA-binding region, zn(2)-C6 fungal-type. Residues 85-116 (GKPDIARLTTKRSSLSQSPPKGEEPLPEWNRH) form a disordered region. The segment covering 105–116 (KGEEPLPEWNRH) has biased composition (basic and acidic residues).

Its subcellular location is the nucleus. Its function is as follows. Transcriptional regulator; part of the gene cluster that mediates the biosynthesis of pyriculol and pyriculariol, two heptaketides that induce lesion formation upon application on rice leaves but are dispensable for pathogenicity. With TRF2, negatively regulates the expression of the gene cluster and the subsequent pyriculol and pyriculariol production. This is Pyriculol/pyriculariol biosynthesis cluster transcription factor 1 from Pyricularia oryzae (strain 70-15 / ATCC MYA-4617 / FGSC 8958) (Rice blast fungus).